The following is a 235-amino-acid chain: Ribosomal RNA small subunit methyltransferase G (235 aa).

S-adenosyl-L-methionine-binding positions include Gly-98, Met-103, 149–150 (VE), and Arg-164.

The protein belongs to the methyltransferase superfamily. RNA methyltransferase RsmG family.

The protein localises to the cytoplasm. It carries out the reaction guanosine(527) in 16S rRNA + S-adenosyl-L-methionine = N(7)-methylguanosine(527) in 16S rRNA + S-adenosyl-L-homocysteine. Its function is as follows. Specifically methylates the N7 position of guanine in position 527 of 16S rRNA. The sequence is that of Ribosomal RNA small subunit methyltransferase G from Cupriavidus metallidurans (strain ATCC 43123 / DSM 2839 / NBRC 102507 / CH34) (Ralstonia metallidurans).